Consider the following 131-residue polypeptide: Outer membrane protein assembly factor BamE (131 aa).

Residues 1–16 (MRNLLLVAAVALSTAG) form the signal peptide. A lipid anchor (N-palmitoyl cysteine) is attached at cysteine 17. Cysteine 17 carries S-diacylglycerol cysteine lipidation. The segment at 112–131 (SAPKQFGRNLARDKKKQRGR) is disordered.

Belongs to the BamE family. Part of the Bam complex.

The protein resides in the cell outer membrane. Its function is as follows. Part of the outer membrane protein assembly complex, which is involved in assembly and insertion of beta-barrel proteins into the outer membrane. The sequence is that of Outer membrane protein assembly factor BamE from Xanthomonas campestris pv. campestris (strain ATCC 33913 / DSM 3586 / NCPPB 528 / LMG 568 / P 25).